A 162-amino-acid polypeptide reads, in one-letter code: NADH-quinone oxidoreductase subunit I (162 aa).

2 consecutive 4Fe-4S ferredoxin-type domains span residues R54–T83 and S93–I122. Positions 63, 66, 69, 73, 102, 105, 108, and 112 each coordinate [4Fe-4S] cluster.

It belongs to the complex I 23 kDa subunit family. NDH-1 is composed of 14 different subunits. Subunits NuoA, H, J, K, L, M, N constitute the membrane sector of the complex. [4Fe-4S] cluster is required as a cofactor.

It localises to the cell inner membrane. The enzyme catalyses a quinone + NADH + 5 H(+)(in) = a quinol + NAD(+) + 4 H(+)(out). NDH-1 shuttles electrons from NADH, via FMN and iron-sulfur (Fe-S) centers, to quinones in the respiratory chain. The immediate electron acceptor for the enzyme in this species is believed to be ubiquinone. Couples the redox reaction to proton translocation (for every two electrons transferred, four hydrogen ions are translocated across the cytoplasmic membrane), and thus conserves the redox energy in a proton gradient. This chain is NADH-quinone oxidoreductase subunit I, found in Francisella philomiragia subsp. philomiragia (strain ATCC 25017 / CCUG 19701 / FSC 153 / O#319-036).